We begin with the raw amino-acid sequence, 123 residues long: DNA-directed RNA polymerase I subunit RPA12 (123 aa).

Residues C17, C20, C35, C38, C84, and C87 each contribute to the Zn(2+) site. The C4-type zinc-finger motif lies at 17 to 38; sequence CPDCGSVLPLPGIQDTVICSRC. A TFIIS-type zinc finger spans residues 80 to 120; sequence IDRRCPRCGHEGMAYHTRQMRSADEGQTVFYTCINCKFQEK. Residues 103-104 carry the Hairpin motif; it reads DE. 2 residues coordinate Zn(2+): C112 and C115.

Belongs to the archaeal RpoM/eukaryotic RPA12/RPB9/RPC11 RNA polymerase family. Component of the RNA polymerase I (Pol I) complex consisting of 13 subunits: a ten-subunit catalytic core composed of POLR1A/RPA1, POLR1B/RPA2, POLR1C/RPAC1, POLR1D/RPAC2, POLR1H/RPA12, POLR2E/RPABC1, POLR2F/RPABC2, POLR2H/RPABC3, POLR2K/RPABC4 and POLR2L/RPABC5; a mobile stalk subunit POLR1F/RPA43 protruding from the core and additional subunits homologous to general transcription factors POLR1E/RPA49 and POLR1G/RPA34. Part of Pol I pre-initiation complex (PIC), in which Pol I core assembles with RRN3 and promoter-bound UTBF and SL1/TIF-IB complex.

The protein resides in the nucleus. Its subcellular location is the nucleolus. Its function is as follows. Core component of RNA polymerase I (Pol I), a DNA-dependent RNA polymerase which synthesizes ribosomal RNA precursors using the four ribonucleoside triphosphates as substrates. Can mediate Pol I proofreading of the nascent RNA transcript. Anchors into the Pol I active site to monitor transcription fidelity and cleave mis-incorporated 5'-ribonucleotides. In Mus musculus (Mouse), this protein is DNA-directed RNA polymerase I subunit RPA12.